We begin with the raw amino-acid sequence, 347 residues long: tRNA pseudouridine synthase D (347 aa).

Asp81 acts as the Nucleophile in catalysis. Residues 158–305 (GVPNYFGSQR…RHDRREIALK (148 aa)) enclose the TRUD domain.

This sequence belongs to the pseudouridine synthase TruD family.

The catalysed reaction is uridine(13) in tRNA = pseudouridine(13) in tRNA. In terms of biological role, responsible for synthesis of pseudouridine from uracil-13 in transfer RNAs. The chain is tRNA pseudouridine synthase D from Vibrio parahaemolyticus serotype O3:K6 (strain RIMD 2210633).